The sequence spans 147 residues: MTIKVHHLRPAPGAKTAKTRVGRGEGSKGKTAGRGTKGSKARKNISAAFEGGQMPIHMRLPKMKGFKNKFKVTFQVVNLERLAELFPNGGQVGPAELVDAGAVRKGQPVKVLGTGDLGGVALQVSAHAFSASAKEKITAAGGSTTEL.

Residues 1–42 (MTIKVHHLRPAPGAKTAKTRVGRGEGSKGKTAGRGTKGSKAR) form a disordered region.

This sequence belongs to the universal ribosomal protein uL15 family. As to quaternary structure, part of the 50S ribosomal subunit.

In terms of biological role, binds to the 23S rRNA. This chain is Large ribosomal subunit protein uL15, found in Salinispora arenicola (strain CNS-205).